Consider the following 2210-residue polypeptide: MEEHVNELHDLVRKWVSDDENFAEQKAIFLSQTKLRAITIEGLKLLSTIVEVDSCQKNSCIHNREKTLNSILRDNKIVCPTLPEIVPDGYRLIGDVLILLEVFVRSNQESFEKKYEQDYTKLMQVKKDLQSHGITLVPMIDGRSSYYVEFMPDWVVEKIRWHLIKLMDLLKEDGESVEELEYERLVSSLSALENQSLGLESLLSIKERGIEYIDRLTKIMYGNLNNNMSVDECKGEILRIYQNFRQLFDQGQFKPKYRKTDREFILKTLREHGLIKCAIMSEEDSCKNCMIHMFKVLTIIKQSFVSNKNIESSFILKEYNQLLSVCNKVKSLKVLNTRRGTLMVLDLIMLNKLLSLIKIYGIKAALTILRMQCIPAVNDRLLSIDFLISIYERKMIKSPKWLEKVHGKLKRVVQDCMFKALEDYLVEIDFDTWFSIKDELLMTQQFKPSICYRSSKGCVCNAETLKNLSMMTEEDFLSYLKILSSLSLSLVNSMKTSSAPKSKINQANDFYGIVHCEEVYFQGFGDNNACTLLYQKTGEKSRCYSVAFSDNEQQIDYGSKISFYADPKRFFLPIMSQDVLNRMCNEMLSWLDFLSDDNIKVVADLLRKLILCVLCTPSKRVQVYLQGFRYLIMAYVNEIHCNDLFAKLEVDALTASERQVMIWMDDLTRIVLEMSKEADMAKSFKFILNLSYLCHLITKETPDRLTDQIKCFEKFLEPKLKFGSLMVNPDSTPELTSEQEDQVCEGLHRLLNKKIFSKCENIPGVSKELVSLCSSLFNSSNLEVKPLLNHDPLTPSFTSTALDLSSNKSVVVPKLNEIGETLTEYDFGKIVSSVVVDLTEHFKTKGKYKLDPRDLRFRIFKKLSSLVEVNPTKKSNRKSESGEVVAPDESFMDELTEEQQLMLSEIEVKVSKTFEGMSKDELNRKQSKEKGAEAHLKRLWSKEVRDKISSETSLHEVKDFDVQLFPFDTYEELVTIVFNDKSAHDFYFLEKYLNPCPLDMLMKNLTLKAFNEGDFFECFKYILIASEFDNKIGRYDHKIRTRLGLKDPALKIREEARISTRESNSESIAKRLDKSFFTNSSLRNLCFYSDESPTTRTGVATDVGKLKFGLSYKEQVGGNRELYVGDLNTKLITRLVEDYAESICSNMKYTCLNSESEFERALLDMKSVVRQGGFAVSMDHSKWGPHMSPAIFAQLLRCLKFRLKDGSEIDKKAVLNILYWHLHKIVEVPFNVVQAFMSGFVKRGLGLMDRGGATLSEEFMFGFFEKGVVPSHLSSVVDMGQGILHNMSDLYGLITEQFINYVLDFCYNVSMTSYTSSDDEIMLSTSSALNHEDGSLNVDVALEILEFHNFLSDKLNKFVSPKTVAGTFASEFKSRFFIWSQEVPLLTKFVAAALHNIKAKAPNQLAETVDTILDQCVANGVSIEIVGAISKRTNSLVCYSGHPLNPFLCLEESDVRDWVDGSRGYRLQRSIENIFPDDLCPNLIRDACRKVFHRIQSGKIEEEFLVASIQGSPDECLNSMLTIADVDEDIKKDLAGYRWLNLRAYGDLRLVLRTKLMSSTRTLQREEIPSLVRSVQSKLSKNFVRGAKRILTDAINKSAFQSCISSGFIGVCKSMGSKCVRDNTGGFVYIKEITKHVMPHTTSYCPYCKPSKNIYCEDALRSVSEYSRPIFWDYFSLVLSNACELGNWVFGAPILPKTVFHLDNPNHFWPIKPSSQTELEDKVGMNHVLYSIRRNYPSIFDEHISPYMSDLNMLRLSWVQKIKFLDLCVALDMSSECLGIISHIMRRKREELYIVKQQELSMSHTRESTNLESGLSLEPQEVCKNFLLQVLFDSMVNPVLLTTSQFRKYFWYGEVLQLPNDASHHLAQFTQFILDCKQLNSSRAMTLDDLDVGYVTSRVKRTTTFVALSTFITSLDWENRHEYKSFQELILSSPCDVFKFEFSMTFSHIRSSHKFRYERCTSYILKVHVVFDKRVLNSNMLEDQSLLITPHSVEYFVSQSGGNHISLDGVGLLPLDPLISGKEVLNIDDVLRHEDVNFSAESPLFSKMRFDFKPFLKELKNKFSYKLIGPDIIMEPLVLDKGQIKEGSRIVSQLKLRLDFKAVFVALGCLEEESRSTFISNLFMYIGSLRGEEHRISMTESNLVQLIDNYPQVFDSMLDATNDWLNCGSFSLCKSKSLGCVMIADERGPFKLKGVNCRRLLPDSQAVEID.

The endonuclease stretch occupies residues 26–285 (KAIFLSQTKL…KCAIMSEEDS (260 aa)). Mn(2+) is bound by residues glutamate 51, aspartate 88, and glutamate 101. Lysine 114 is an active-site residue. The 197-residue stretch at 1163 to 1359 (LDMKSVVRQG…FLSDKLNKFV (197 aa)) folds into the RdRp catalytic domain. Position 1319 (aspartate 1319) interacts with Mg(2+).

It belongs to the Bunyavirales RNA polymerase family. Homomultimer; the oligomeric structure is essential for the polymerase activity. Interacts with nucleoprotein N. Interacts with protein Z; this interaction inhibits viral transcription and replication, Z partially blocks the product exit tunnel for the releasing nascent RNA product. Requires Mn(2+) as cofactor. Mg(2+) is required as a cofactor.

The protein localises to the virion. It is found in the host cytoplasm. The catalysed reaction is RNA(n) + a ribonucleoside 5'-triphosphate = RNA(n+1) + diphosphate. Functionally, RNA-dependent RNA polymerase, which is responsible for the replication and transcription of the viral RNA genome using antigenomic RNA as an intermediate. During transcription, synthesizes subgenomic RNAs and assures their capping by a cap-snatching mechanism, which involves the endonuclease activity cleaving the host capped pre-mRNAs. These short capped RNAs are then used as primers for viral transcription. The 3'-end of subgenomic mRNAs molecules are heterogeneous and not polyadenylated. The replicase function is to direct synthesis of antigenomic and genomic RNA which are encapsidated and non capped. As a consequence of the use of the same enzyme for both transcription and replication, these mechanisms need to be well coordinated. These processes may be regulated by proteins N and Z in a dose-dependent manner. Z protein inhibits the viral polymerase L und thus the viral transcription and RNA synthesis. The polypeptide is RNA-directed RNA polymerase L (Sigmodon alstoni (PIRV)).